The primary structure comprises 272 residues: Putative B3 domain-containing protein Os02g0455900 (272 aa).

The segment at residues 30 to 134 is a DNA-binding region (TF-B3); that stretch reads GKVLMPSDVS…RFFICCRCTC (105 aa). Residues 189–227 are disordered; it reads TASLGCAAAQPPQVPPTPTPRRRRRSMMVHPEPPEHTTD.

Its subcellular location is the nucleus. In Oryza sativa subsp. japonica (Rice), this protein is Putative B3 domain-containing protein Os02g0455900.